We begin with the raw amino-acid sequence, 568 residues long: 2-succinyl-5-enolpyruvyl-6-hydroxy-3-cyclohexene-1-carboxylate synthase (568 aa).

Belongs to the TPP enzyme family. MenD subfamily. In terms of assembly, homodimer. The cofactor is Mg(2+). Mn(2+) serves as cofactor. Requires thiamine diphosphate as cofactor.

It carries out the reaction isochorismate + 2-oxoglutarate + H(+) = 5-enolpyruvoyl-6-hydroxy-2-succinyl-cyclohex-3-ene-1-carboxylate + CO2. It functions in the pathway quinol/quinone metabolism; 1,4-dihydroxy-2-naphthoate biosynthesis; 1,4-dihydroxy-2-naphthoate from chorismate: step 2/7. The protein operates within quinol/quinone metabolism; menaquinone biosynthesis. In terms of biological role, catalyzes the thiamine diphosphate-dependent decarboxylation of 2-oxoglutarate and the subsequent addition of the resulting succinic semialdehyde-thiamine pyrophosphate anion to isochorismate to yield 2-succinyl-5-enolpyruvyl-6-hydroxy-3-cyclohexene-1-carboxylate (SEPHCHC). This chain is 2-succinyl-5-enolpyruvyl-6-hydroxy-3-cyclohexene-1-carboxylate synthase, found in Actinobacillus succinogenes (strain ATCC 55618 / DSM 22257 / CCUG 43843 / 130Z).